We begin with the raw amino-acid sequence, 129 residues long: DNA-directed RNA polymerase III subunit rpc9 (129 aa).

Belongs to the eukaryotic RPC9 RNA polymerase subunit family. Component of the RNA polymerase III (Pol III) complex.

It localises to the cytoplasm. The protein resides in the nucleus. Its function is as follows. DNA-dependent RNA polymerase catalyzes the transcription of DNA into RNA using the four ribonucleoside triphosphates as substrates. Specific peripheric component of RNA polymerase III which synthesizes small RNAs, such as 5S rRNA and tRNAs. This is DNA-directed RNA polymerase III subunit rpc9 (rpc17) from Schizosaccharomyces pombe (strain 972 / ATCC 24843) (Fission yeast).